The following is a 1359-amino-acid chain: Junctional cadherin 5-associated protein (1359 aa).

Disordered regions lie at residues 1-147 (MYSV…SLPV), 249-411 (PLNE…PAHP), 454-554 (NSSP…TCET), 591-813 (SHLP…CNSK), 840-1076 (KELQ…TIEI), 1105-1141 (RAGQ…PRVS), 1157-1207 (PLFV…KDVE), 1225-1260 (SVAG…DRLM), and 1276-1359 (FRNA…VERV). The segment covering 15–28 (LSRDPPASREDNPK) has biased composition (basic and acidic residues). Composition is skewed to polar residues over residues 82–91 (PQSTSASRTS) and 98–112 (QPPS…TGND). The span at 120–135 (RQEARSQKPREHENLE) shows a compositional bias: basic and acidic residues. Positions 302-321 (QQSRGGADSSDSQDSQQMDA) are enriched in low complexity. A compositionally biased stretch (pro residues) spans 335-353 (LEPPVYVPPPSYRSPPQNI). The span at 539-554 (RQVSSPYSQGESTCET) shows a compositional bias: polar residues. The span at 591–613 (SHLPDRDMDNNDLKPSADQKNGS) shows a compositional bias: basic and acidic residues. Composition is skewed to polar residues over residues 619–632 (LQEQ…STDL), 689–704 (QQTQ…SSQL), and 756–773 (LSPS…SVDQ). Residues 849 to 859 (SSSSSSSSSSS) show a composition bias toward low complexity. The segment covering 868-880 (QENRAHCRQEDVG) has biased composition (basic and acidic residues). A compositionally biased stretch (polar residues) spans 1003–1013 (PKITSAFSSVK). Phosphoserine occurs at positions 1044 and 1050. Ser1194 is modified (phosphoserine). Ser1281 is subject to Phosphoserine. Residues 1324–1342 (SISREEKEHPAAQKEKSMD) show a composition bias toward basic and acidic residues.

It is found in the cell junction. Its subcellular location is the adherens junction. This is Junctional cadherin 5-associated protein from Homo sapiens (Human).